The primary structure comprises 531 residues: Membrane protein insertase YidC (531 aa).

A run of 4 helical transmembrane segments spans residues 5 to 25 (ALIAVVLSILFFYGYTALFSP), 343 to 363 (GNYGIAIIIITVIIKVIFYPL), 415 to 435 (LPMLVQIPVFFALYKALMFSI), and 489 to 509 (PVVFTFMFLNFPSGLVLYWLV).

This sequence belongs to the OXA1/ALB3/YidC family. Type 1 subfamily. Interacts with the Sec translocase complex via SecD. Specifically interacts with transmembrane segments of nascent integral membrane proteins during membrane integration.

It is found in the cell inner membrane. Required for the insertion and/or proper folding and/or complex formation of integral membrane proteins into the membrane. Involved in integration of membrane proteins that insert both dependently and independently of the Sec translocase complex, as well as at least some lipoproteins. Aids folding of multispanning membrane proteins. The protein is Membrane protein insertase YidC of Geobacter sulfurreducens (strain ATCC 51573 / DSM 12127 / PCA).